Here is a 201-residue protein sequence, read N- to C-terminus: Small ribosomal subunit protein uS4 (201 aa).

Positions 91–151 constitute an S4 RNA-binding domain; the sequence is SRLDNVVYRA…EKSQKMNWFE (61 aa).

It belongs to the universal ribosomal protein uS4 family. In terms of assembly, part of the 30S ribosomal subunit. Contacts protein S5. The interaction surface between S4 and S5 is involved in control of translational fidelity.

One of the primary rRNA binding proteins, it binds directly to 16S rRNA where it nucleates assembly of the body of the 30S subunit. In terms of biological role, with S5 and S12 plays an important role in translational accuracy. In Corynebacterium efficiens (strain DSM 44549 / YS-314 / AJ 12310 / JCM 11189 / NBRC 100395), this protein is Small ribosomal subunit protein uS4.